The primary structure comprises 923 residues: Transportin-3 (923 aa).

M1 is modified (N-acetylmethionine). At S74 the chain carries Phosphoserine. At T896 the chain carries Phosphothreonine.

As to quaternary structure, interacts with (GTP-bound) Ran. Interacts with (phosphorylated) SFRS1 and SFRS2; leading to their nuclear import. Interacts with NUP62. Interacts with RBM4. Interacts with CPSF6, promoting its nuclear import. In terms of assembly, (Microbial infection) Interacts with the HIV-1 pre-integration complex (PIC), which is composed of viral genome, matrix protein, Vpr and integrase. Interacts with HIV-1 integrase protein; the interaction is direct. As to expression, expressed in skeletal muscle.

Its subcellular location is the nucleus envelope. It is found in the cytoplasm. Functionally, importin, which transports target proteins into the nucleus. Specifically mediates the nuclear import of splicing factor serine/arginine (SR) proteins, such as RBM4, SFRS1 and SFRS2, by recognizing phosphorylated SR domains. Also mediates the nuclear import of serine/arginine (SR) protein CPSF6, independently of CPSF6 phosphorylation. The nuclear import process is regulated by the small GTPase Ran that partitions between cytoplasm and nucleus in the predominantly GDP- and GTP-bound form, respectively. Importin associates with target cargo proteins in the cytoplasm, and the competitive binding of GTP-bound Ran induces the release of cargos in the nucleus. (Microbial infection) Involved in immunodeficiency virus (HIV-1) infection by importing the pre-integration complex (PIC) into the nucleus. Required for a nuclear maturation step of HIV-1 prior to integration. This chain is Transportin-3, found in Homo sapiens (Human).